We begin with the raw amino-acid sequence, 384 residues long: NADP-dependent alcohol dehydrogenase 3 (384 aa).

Belongs to the iron-containing alcohol dehydrogenase family.

It carries out the reaction a primary alcohol + NADP(+) = an aldehyde + NADPH + H(+). Has NADP-dependent alcohol dehydrogenase activity. This chain is NADP-dependent alcohol dehydrogenase 3, found in Entamoeba histolytica (strain ATCC 30459 / HM-1:IMSS / ABRM).